Reading from the N-terminus, the 613-residue chain is V-type proton ATPase catalytic subunit A isoform 1 (613 aa).

Residue 240-247 participates in ATP binding; it reads GAFGCGKT.

This sequence belongs to the ATPase alpha/beta chains family. In terms of assembly, V-ATPase is a heteromultimeric enzyme composed of a peripheral catalytic V1 complex (main components: subunits A, B, C, D, E, and F) attached to an integral membrane V0 proton pore complex (main component: the proteolipid protein).

It catalyses the reaction ATP + H2O + 4 H(+)(in) = ADP + phosphate + 5 H(+)(out). Functionally, catalytic subunit of the peripheral V1 complex of vacuolar ATPase. V-ATPase vacuolar ATPase is responsible for acidifying a variety of intracellular compartments in eukaryotic cells. This Acetabularia acetabulum (Mermaid's wine glass) protein is V-type proton ATPase catalytic subunit A isoform 1.